The primary structure comprises 64 residues: Metallothionein (64 aa).

Belongs to the metallothionein superfamily. Type 4 family.

In terms of biological role, metallothioneins have a high content of cysteine residues that bind various heavy metals. The polypeptide is Metallothionein (Sterechinus neumayeri (Antarctic sea urchin)).